Consider the following 117-residue polypeptide: Large ribosomal subunit protein bL20c (117 aa).

Belongs to the bacterial ribosomal protein bL20 family.

The protein resides in the plastid. Its subcellular location is the chloroplast. Binds directly to 23S ribosomal RNA and is necessary for the in vitro assembly process of the 50S ribosomal subunit. It is not involved in the protein synthesizing functions of that subunit. This chain is Large ribosomal subunit protein bL20c, found in Arabis hirsuta (Hairy rock-cress).